A 210-amino-acid chain; its full sequence is Cytochrome c biogenesis ATP-binding export protein CcmA (210 aa).

The 203-residue stretch at 3 to 205 (LHLQAAGLAC…KPSGYRELNL (203 aa)) folds into the ABC transporter domain. ATP is bound at residue 37–44 (GPNGSGKT).

This sequence belongs to the ABC transporter superfamily. CcmA exporter (TC 3.A.1.107) family. The complex is composed of two ATP-binding proteins (CcmA) and two transmembrane proteins (CcmB).

It localises to the cell inner membrane. The catalysed reaction is heme b(in) + ATP + H2O = heme b(out) + ADP + phosphate + H(+). In terms of biological role, part of the ABC transporter complex CcmAB involved in the biogenesis of c-type cytochromes; once thought to export heme, this seems not to be the case, but its exact role is uncertain. Responsible for energy coupling to the transport system. This Pseudomonas putida (strain ATCC 47054 / DSM 6125 / CFBP 8728 / NCIMB 11950 / KT2440) protein is Cytochrome c biogenesis ATP-binding export protein CcmA.